Reading from the N-terminus, the 198-residue chain is Small ribosomal subunit protein eS1 (198 aa).

The protein belongs to the eukaryotic ribosomal protein eS1 family.

The sequence is that of Small ribosomal subunit protein eS1 from Methanosphaerula palustris (strain ATCC BAA-1556 / DSM 19958 / E1-9c).